The following is a 287-amino-acid chain: Pyridoxal kinase PdxY (287 aa).

Residues S10 and 45–46 (TQ) each bind substrate. ATP is bound by residues D112, A144, E149, K182, and 209–212 (RPLV). A substrate-binding site is contributed by D224.

This sequence belongs to the pyridoxine kinase family. PdxY subfamily. In terms of assembly, homodimer. The cofactor is Mg(2+).

It catalyses the reaction pyridoxal + ATP = pyridoxal 5'-phosphate + ADP + H(+). Its pathway is cofactor metabolism; pyridoxal 5'-phosphate salvage; pyridoxal 5'-phosphate from pyridoxal: step 1/1. Functionally, pyridoxal kinase involved in the salvage pathway of pyridoxal 5'-phosphate (PLP). Catalyzes the phosphorylation of pyridoxal to PLP. The protein is Pyridoxal kinase PdxY of Escherichia coli (strain UTI89 / UPEC).